A 291-amino-acid chain; its full sequence is Popeye domain-containing protein 3 (291 aa).

Asn4 carries N-linked (GlcNAc...) asparagine glycosylation. Helical transmembrane passes span 27-44, 48-70, and 77-99; these read GAIY…FMGG, FGLL…WAWV, and IFSW…AYQV.

Belongs to the popeye family. In terms of tissue distribution, expressed in cardiac and skeletal muscle.

The protein localises to the membrane. Its function is as follows. May play a role in the maintenance of heart function mediated, at least in part, through cAMP-binding. May play a role in the regulation of KCNK2-mediated current amplitude. This chain is Popeye domain-containing protein 3 (Popdc3), found in Mus musculus (Mouse).